A 710-amino-acid polypeptide reads, in one-letter code: Forkhead box protein P2 (710 aa).

The segment covering methionine 1–aspartate 28 has biased composition (polar residues). Disordered regions lie at residues methionine 1 to valine 44 and histidine 272 to serine 334. Over residues serine 273–glycine 283 the composition is skewed to basic and acidic residues. Over residues threonine 287–serine 300 the composition is skewed to low complexity. Polar residues predominate over residues serine 310 to leucine 319. The span at alanine 321–glycine 332 shows a compositional bias: basic and acidic residues. The C2H2-type zinc-finger motif lies at cysteine 343 to histidine 366. The interval valine 383–leucine 404 is leucine-zipper. Positions proline 417 to valine 421 are CTBP1-binding. Over residues threonine 433–glutamine 454 the composition is skewed to low complexity. The interval threonine 433–threonine 460 is disordered. The segment at residues arginine 499–leucine 589 is a DNA-binding region (fork-head). Disordered regions lie at residues leucine 644–isoleucine 663 and valine 673–glutamate 710. A compositionally biased stretch (acidic residues) spans leucine 694–glutamate 710.

As to quaternary structure, forms homodimers and heterodimers with FOXP1 and FOXP4. Dimerization is required for DNA-binding. Interacts with CTBP1. Interacts with FOXP1. Interacts with TBR1. Interacts with ZMYM2.

The protein resides in the nucleus. Functionally, transcriptional repressor that may play a role in the specification and differentiation of lung epithelium. May also play a role in developing neural, gastrointestinal and cardiovascular tissues. Can act with CTBP1 to synergistically repress transcription but CTPBP1 is not essential. Plays a role in synapse formation by regulating SRPX2 levels. The sequence is that of Forkhead box protein P2 (Foxp2) from Rattus norvegicus (Rat).